The following is a 227-amino-acid chain: Orotidine 5'-phosphate decarboxylase (227 aa).

Substrate is bound by residues Asp-8, Lys-30, 59-68, Thr-118, Arg-178, Gln-187, Gly-207, and Arg-208; that span reads DLKLYDIPYT. The active-site Proton donor is Lys-61.

Belongs to the OMP decarboxylase family. Type 1 subfamily. As to quaternary structure, homodimer.

The enzyme catalyses orotidine 5'-phosphate + H(+) = UMP + CO2. It functions in the pathway pyrimidine metabolism; UMP biosynthesis via de novo pathway; UMP from orotate: step 2/2. Its function is as follows. Catalyzes the decarboxylation of orotidine 5'-monophosphate (OMP) to uridine 5'-monophosphate (UMP). The polypeptide is Orotidine 5'-phosphate decarboxylase (Helicobacter pylori (strain P12)).